Here is a 56-residue protein sequence, read N- to C-terminus: Large ribosomal subunit protein bL33 (56 aa).

This sequence belongs to the bacterial ribosomal protein bL33 family.

In Histophilus somni (strain 129Pt) (Haemophilus somnus), this protein is Large ribosomal subunit protein bL33.